The chain runs to 750 residues: GTP pyrophosphokinase rsh (750 aa).

Residues 45-144 form the HD domain; the sequence is YFSHPLEVAA…VKLADRLHNM (100 aa). Positions 390-451 constitute a TGS domain; it reads DQVFCFTPKG…KNGDEVDIIR (62 aa). Positions 587-613 are disordered; that stretch reads AAKVDPAATTPKPGKRALPIRGTNPDL. The ACT domain occupies 676 to 750; that stretch reads RISVSAINSP…SVSSAKRVNG (75 aa).

It belongs to the RelA/SpoT family.

The enzyme catalyses GTP + ATP = guanosine 3'-diphosphate 5'-triphosphate + AMP. Functionally, functions as a (p)ppGpp synthase. In eubacteria ppGpp (guanosine 3'-diphosphate 5'-diphosphate) is a mediator of the stringent response that coordinates a variety of cellular activities in response to changes in nutritional abundance. Plays a role in adaptation of Brucella to its intracellular host environment. The protein is GTP pyrophosphokinase rsh (rsh) of Brucella ovis (strain ATCC 25840 / 63/290 / NCTC 10512).